Reading from the N-terminus, the 275-residue chain is Pyrroline-5-carboxylate reductase (275 aa).

This sequence belongs to the pyrroline-5-carboxylate reductase family.

The protein resides in the cytoplasm. It carries out the reaction L-proline + NADP(+) = (S)-1-pyrroline-5-carboxylate + NADPH + 2 H(+). The catalysed reaction is L-proline + NAD(+) = (S)-1-pyrroline-5-carboxylate + NADH + 2 H(+). It functions in the pathway amino-acid biosynthesis; L-proline biosynthesis; L-proline from L-glutamate 5-semialdehyde: step 1/1. Its function is as follows. Catalyzes the reduction of 1-pyrroline-5-carboxylate (PCA) to L-proline. This chain is Pyrroline-5-carboxylate reductase, found in Pasteurella multocida (strain Pm70).